The primary structure comprises 872 residues: Cyanophycin synthetase (872 aa).

Positions Lys224–Phe480 constitute an ATP-grasp domain. Gly495–Thr501 serves as a coordination point for ATP.

In the C-terminal section; belongs to the MurCDEF family. In terms of assembly, homodimer.

The catalysed reaction is [L-4-(L-arginin-2-N-yl)aspartate](n) + L-aspartate + ATP = [L-4-(L-arginin-2-N-yl)aspartate](n)-L-aspartate + ADP + phosphate + H(+). It carries out the reaction [L-4-(L-arginin-2-N-yl)aspartate](n)-L-aspartate + L-arginine + ATP = [L-4-(L-arginin-2-N-yl)aspartate](n+1) + ADP + phosphate + H(+). Catalyzes the ATP-dependent polymerization of arginine and aspartate to multi-L-arginyl-poly-L-aspartic acid (cyanophycin; a water-insoluble reserve polymer). This chain is Cyanophycin synthetase (cphA), found in Crocosphaera subtropica (strain ATCC 51142 / BH68) (Cyanothece sp. (strain ATCC 51142)).